The sequence spans 162 residues: Probable chemoreceptor glutamine deamidase CheD (162 aa).

It belongs to the CheD family.

It carries out the reaction L-glutaminyl-[protein] + H2O = L-glutamyl-[protein] + NH4(+). Its function is as follows. Probably deamidates glutamine residues to glutamate on methyl-accepting chemotaxis receptors (MCPs), playing an important role in chemotaxis. The polypeptide is Probable chemoreceptor glutamine deamidase CheD (Clostridium botulinum (strain Alaska E43 / Type E3)).